A 63-amino-acid chain; its full sequence is Large ribosomal subunit protein uL29 (63 aa).

This sequence belongs to the universal ribosomal protein uL29 family.

The sequence is that of Large ribosomal subunit protein uL29 from Photorhabdus laumondii subsp. laumondii (strain DSM 15139 / CIP 105565 / TT01) (Photorhabdus luminescens subsp. laumondii).